The sequence spans 248 residues: PF03932 family protein CutC (248 aa).

It belongs to the CutC family. In terms of assembly, homodimer.

The protein localises to the cytoplasm. This is PF03932 family protein CutC from Escherichia coli O17:K52:H18 (strain UMN026 / ExPEC).